The following is a 333-amino-acid chain: Protein RecA (333 aa).

Residue 69-76 (GPESSGKT) coordinates ATP.

This sequence belongs to the RecA family.

It localises to the cytoplasm. Its function is as follows. Can catalyze the hydrolysis of ATP in the presence of single-stranded DNA, the ATP-dependent uptake of single-stranded DNA by duplex DNA, and the ATP-dependent hybridization of homologous single-stranded DNAs. It interacts with LexA causing its activation and leading to its autocatalytic cleavage. The chain is Protein RecA from Mesoplasma florum (strain ATCC 33453 / NBRC 100688 / NCTC 11704 / L1) (Acholeplasma florum).